We begin with the raw amino-acid sequence, 253 residues long: tRNA pseudouridine synthase A (253 aa).

D53 acts as the Nucleophile in catalysis. Substrate is bound at residue Y111.

Belongs to the tRNA pseudouridine synthase TruA family. As to quaternary structure, homodimer.

It catalyses the reaction uridine(38/39/40) in tRNA = pseudouridine(38/39/40) in tRNA. Functionally, formation of pseudouridine at positions 38, 39 and 40 in the anticodon stem and loop of transfer RNAs. The sequence is that of tRNA pseudouridine synthase A from Chlorobium luteolum (strain DSM 273 / BCRC 81028 / 2530) (Pelodictyon luteolum).